We begin with the raw amino-acid sequence, 155 residues long: Protein-export protein SecB (155 aa).

It belongs to the SecB family. In terms of assembly, homotetramer, a dimer of dimers. One homotetramer interacts with 1 SecA dimer.

The protein resides in the cytoplasm. In terms of biological role, one of the proteins required for the normal export of preproteins out of the cell cytoplasm. It is a molecular chaperone that binds to a subset of precursor proteins, maintaining them in a translocation-competent state. It also specifically binds to its receptor SecA. This is Protein-export protein SecB from Escherichia coli O127:H6 (strain E2348/69 / EPEC).